The sequence spans 454 residues: Ig mu chain C region (454 aa).

Residues 1–105 (SPSSPTVFPL…NKDLRVPIPV (105 aa)) form a CH1 region. Cysteines 27 and 88 form a disulfide. N-linked (GlcNAc...) asparagine glycans are attached at residues Asn-45, Asn-112, Asn-192, Asn-210, Asn-238, Asn-257, and Asn-280. Residues 106–218 (VTEMNPNVSV…KNVSSTCAAS (113 aa)) are CH2. Cys-135 and Cys-198 are disulfide-bonded. Residues 219-324 (PSTDIQAFPI…QKKFISKPRE (106 aa)) form a CH3 region. Disulfide bonds link Cys-245–Cys-304 and Cys-352–Cys-414. A CH4 region spans residues 325 to 454 (MNKTPPAVYQ…IMSDAGGTCY (130 aa)). Asn-441 carries N-linked (GlcNAc...) asparagine glycosylation.

The protein is Ig mu chain C region of Mesocricetus auratus (Golden hamster).